The following is a 185-amino-acid chain: Phosphatidylglycerophosphatase GEP4, mitochondrial (185 aa).

The short motif at 45–49 is the Phosphoryl acceptor element; that stretch reads DKDNC.

This sequence belongs to the GEP4 family.

Its subcellular location is the mitochondrion inner membrane. The enzyme catalyses a 1,2-diacyl-sn-glycero-3-phospho-(1'-sn-glycero-3'-phosphate) + H2O = a 1,2-diacyl-sn-glycero-3-phospho-(1'-sn-glycerol) + phosphate. It functions in the pathway phospholipid metabolism; phosphatidylglycerol biosynthesis; phosphatidylglycerol from CDP-diacylglycerol: step 2/2. In terms of biological role, phosphatidylglycerophosphatase involved in the biosynthesis of cardiolipin (CL), a unique dimeric phosphoglycerolipid predominantly present in mitochondrial membranes and which has important functions for cellular energy metabolism, mitochondrial dynamics and the initiation of apoptotic pathways. Required for the stability of respiratory chain supercomplexes and for growth at elevated temperature, in presence of ethidium bromide or in absence of prohibitins. The protein is Phosphatidylglycerophosphatase GEP4, mitochondrial (GEP4) of Saccharomyces cerevisiae (strain ATCC 204508 / S288c) (Baker's yeast).